Reading from the N-terminus, the 62-residue chain is MLKCDICGKGPLAGYQYSHSHRKSIRKWKPNIKKVRAIVDDTPVRLHVCTKCLKAGKVQRAL.

The protein belongs to the bacterial ribosomal protein bL28 family.

The chain is Large ribosomal subunit protein bL28 from Thermoanaerobacter pseudethanolicus (strain ATCC 33223 / 39E) (Clostridium thermohydrosulfuricum).